The following is a 444-amino-acid chain: Cerebral cavernous malformations 2 protein (444 aa).

A disordered region spans residues 1–37 (MEEEGKKGKKPGIVSPFKRVFLKGEKSRDKKAHEKVT). Residue S15 is modified to Phosphoserine. The segment covering 22 to 37 (LKGEKSRDKKAHEKVT) has biased composition (basic and acidic residues). Residues 59–248 (LSDYIEKEVK…TPTHHLSLHS (190 aa)) enclose the PID domain. Residue S164 is modified to Phosphoserine. Residues 283-376 (SKTISESELS…NFLETIGVKD (94 aa)) form a harmonin homology domain region. Phosphoserine is present on residues S384 and S393. Positions 391–423 (ALSTTSSSTTNGNRATGSSDDRSAPSEGDEWDR) are disordered. The span at 392 to 408 (LSTTSSSTTNGNRATGS) shows a compositional bias: low complexity. Position 394 is a phosphothreonine (T394). Residue S396 is modified to Phosphoserine. A Phosphothreonine modification is found at T399.

This sequence belongs to the CCM2 family. As to quaternary structure, part of a complex with MAP2K3, MAP3K3 and RAC1. Binds RAC1 directly and independently of its nucleotide-bound state. Interacts with HEG1 and KRIT1; KRIT1 greatly facilitates the interaction with HEG1. Interacts with PDCD10.

Its subcellular location is the cytoplasm. In terms of biological role, component of the CCM signaling pathway which is a crucial regulator of heart and vessel formation and integrity. May act through the stabilization of endothelial cell junctions. May function as a scaffold protein for MAP2K3-MAP3K3 signaling. Seems to play a major role in the modulation of MAP3K3-dependent p38 activation induced by hyperosmotic shock. The protein is Cerebral cavernous malformations 2 protein (CCM2) of Homo sapiens (Human).